Reading from the N-terminus, the 353-residue chain is Photosystem II protein D1 (353 aa).

The residue at position 2 (threonine 2) is an N-acetylthreonine. Threonine 2 is modified (phosphothreonine). A run of 3 helical transmembrane segments spans residues 29-46 (YIGWFGVLMIPTLLTATS), 118-133 (HFLLGVACYMGREWEL), and 142-156 (WIAVAYSAPVAAATA). Histidine 118 contacts chlorophyll a. Position 126 (tyrosine 126) interacts with pheophytin a. [CaMn4O5] cluster contacts are provided by aspartate 170 and glutamate 189. The helical transmembrane segment at 197–218 (FHMLGVAGVFGGSLFSAMHGSL) threads the bilayer. Histidine 198 contributes to the chlorophyll a binding site. A quinone contacts are provided by residues histidine 215 and 264–265 (SF). A Fe cation-binding site is contributed by histidine 215. Histidine 272 is a Fe cation binding site. Residues 274–288 (FLAAWPVVGIWFTAL) form a helical membrane-spanning segment. [CaMn4O5] cluster-binding residues include histidine 332, glutamate 333, aspartate 342, and alanine 344. The propeptide occupies 345–353 (AVEAPSTNG).

This sequence belongs to the reaction center PufL/M/PsbA/D family. PSII is composed of 1 copy each of membrane proteins PsbA, PsbB, PsbC, PsbD, PsbE, PsbF, PsbH, PsbI, PsbJ, PsbK, PsbL, PsbM, PsbT, PsbX, PsbY, PsbZ, Psb30/Ycf12, at least 3 peripheral proteins of the oxygen-evolving complex and a large number of cofactors. It forms dimeric complexes. The D1/D2 heterodimer binds P680, chlorophylls that are the primary electron donor of PSII, and subsequent electron acceptors. It shares a non-heme iron and each subunit binds pheophytin, quinone, additional chlorophylls, carotenoids and lipids. D1 provides most of the ligands for the Mn4-Ca-O5 cluster of the oxygen-evolving complex (OEC). There is also a Cl(-1) ion associated with D1 and D2, which is required for oxygen evolution. The PSII complex binds additional chlorophylls, carotenoids and specific lipids. serves as cofactor. Post-translationally, tyr-161 forms a radical intermediate that is referred to as redox-active TyrZ, YZ or Y-Z. C-terminally processed by CTPA; processing is essential to allow assembly of the oxygen-evolving complex and thus photosynthetic growth.

The protein localises to the plastid. Its subcellular location is the chloroplast thylakoid membrane. It catalyses the reaction 2 a plastoquinone + 4 hnu + 2 H2O = 2 a plastoquinol + O2. In terms of biological role, photosystem II (PSII) is a light-driven water:plastoquinone oxidoreductase that uses light energy to abstract electrons from H(2)O, generating O(2) and a proton gradient subsequently used for ATP formation. It consists of a core antenna complex that captures photons, and an electron transfer chain that converts photonic excitation into a charge separation. The D1/D2 (PsbA/PsbD) reaction center heterodimer binds P680, the primary electron donor of PSII as well as several subsequent electron acceptors. The protein is Photosystem II protein D1 of Ceratophyllum demersum (Rigid hornwort).